We begin with the raw amino-acid sequence, 625 residues long: Coagulation factor XI (625 aa).

Residues 1–18 form the signal peptide; sequence MTLLYQMVHFALFASVAG. Apple domains lie at 20–103, 110–193, 200–283, and 291–374; these read CVTT…SKQC, CSKD…LKSC, CIRD…LQHC, and CHSS…LRLC. 17 disulfide bridges follow: cysteine 20–cysteine 103, cysteine 46–cysteine 76, cysteine 50–cysteine 56, cysteine 110–cysteine 193, cysteine 136–cysteine 165, cysteine 140–cysteine 146, cysteine 200–cysteine 283, cysteine 226–cysteine 255, cysteine 230–cysteine 236, cysteine 291–cysteine 374, cysteine 317–cysteine 346, cysteine 321–cysteine 327, cysteine 380–cysteine 500, cysteine 416–cysteine 432, cysteine 514–cysteine 581, cysteine 545–cysteine 560, and cysteine 571–cysteine 599. Asparagine 90 and asparagine 126 each carry an N-linked (GlcNAc...) asparagine glycan. A Peptidase S1 domain is found at 388–623; sequence IVGGTQSVHG…YVDWILEKTQ (236 aa). The active-site Charge relay system is the histidine 431. A glycan (N-linked (GlcNAc...) asparagine) is linked at asparagine 450. Catalysis depends on aspartate 480, which acts as the Charge relay system. Residue asparagine 491 is glycosylated (N-linked (GlcNAc...) asparagine). Residue 547-550 participates in heparin binding; that stretch reads AGYR. Serine 575 functions as the Charge relay system in the catalytic mechanism.

Belongs to the peptidase S1 family. Plasma kallikrein subfamily. In terms of assembly, homodimer; disulfide-linked. After activation the heavy and light chains are also linked by a disulfide bond. Interacts (activated) with F9 (inactive and activated) in calcium-dependent manner. Forms a heterodimer with SERPINA5. Activated by factor XIIa (or XII), which cleaves each polypeptide after Arg-387 into the light chain, which contains the active site, and the heavy chain, which associates with high molecular weight (HMW) kininogen. Activated by F12 (activated); the presence of negatively charged surfaces accelerates activation. Activated by F2 (thrombin); the presence of negatively charged surfaces, such as polyphosphate and dextran sulfate, strongly accelerates activation. Autoactivated; the presence of negatively charged surfaces, such as polyphosphate and dextran sulfate, accelerates autoactivation and autolysis. In terms of processing, N-glycosylated on both chains. N-glycosylated sites mainly consist of nonfucosylated sialylated biantennary (in high abundance) and/or triantennary (in low abundance) complex structures.

It is found in the secreted. The enzyme catalyses Selective cleavage of Arg-|-Ala and Arg-|-Val bonds in factor IX to form factor IXa.. Its activity is regulated as follows. Inhibited by SERPINA5. Its function is as follows. Factor XI triggers the middle phase of the intrinsic pathway of blood coagulation by activating factor IX. The chain is Coagulation factor XI (F11) from Bos taurus (Bovine).